The chain runs to 327 residues: MSHLAELVASAKAAISQASDVAALDNVRVEYLGKKGHLTLQMTTLRELPPEERPAAGAVINEAKEQVQQALNARKAELESAALNARLAADTIDVSLPGRRIENGGLHPVTRTIDRIESFFGELGFTVATGPEIEDDYHNFDALNIPGHHPARADHDTFWFDATRLLRTQTSGVQIRTMKAQQPPIRIIAPGRVYRNDYDQTHTPMFHQMEGLIVDTNISFTNLKGTLHDFLRNFFEEDLQIRFRPSYFPFTEPSAEVDVMGKNGKWLEVLGCGMVHPNVLRNVGIDPEVYSGFAFGMGMERLTMLRYGVTDLRSFFENDLRFLKQFK.

E252 contributes to the Mg(2+) binding site.

The protein belongs to the class-II aminoacyl-tRNA synthetase family. Phe-tRNA synthetase alpha subunit type 1 subfamily. As to quaternary structure, tetramer of two alpha and two beta subunits. Mg(2+) is required as a cofactor.

It localises to the cytoplasm. It carries out the reaction tRNA(Phe) + L-phenylalanine + ATP = L-phenylalanyl-tRNA(Phe) + AMP + diphosphate + H(+). The sequence is that of Phenylalanine--tRNA ligase alpha subunit from Shigella dysenteriae serotype 1 (strain Sd197).